A 467-amino-acid polypeptide reads, in one-letter code: Serine decarboxylase 2 (467 aa).

H178 contacts substrate. K290 is modified (N6-(pyridoxal phosphate)lysine).

Belongs to the group II decarboxylase family. The cofactor is pyridoxal 5'-phosphate.

It catalyses the reaction L-serine + H(+) = ethanolamine + CO2. Catalyzes the biosynthesis of ethanolamine from serine. Decarboxylation of free serine is the major source of ethanolamine production in plants and ethanolamine metabolism is crucial for the synthesis of choline, phosphatidylethanolamine (PE) and phosphatidylcholine (PC), and thus for plant growth. In Oryza sativa subsp. japonica (Rice), this protein is Serine decarboxylase 2.